We begin with the raw amino-acid sequence, 188 residues long: Putative CC-type chemokine FPV060 (188 aa).

This sequence belongs to the intercrine beta (chemokine CC) family. Highly divergent.

The chain is Putative CC-type chemokine FPV060 from Fowlpox virus (strain NVSL) (FPV).